The primary structure comprises 273 residues: MAFLAGPRLLDWASSPPHLQFNKFVLTGYRPASSGSGCLRSLFYLHNELGNIYTHGLALLGFLVLVPMTMPWGQLGKDGWLGGTHCVACLAPPAGSVLYHLFMCHQGGSAVYARLLALDMCGVCLVNTLGALPIIHCTLACRPWLRPAALVGYTVLSGVAGWRALTAPSTSARLRAFGWQAAARLLVFGARGVGLGSGAPGSLPCYLRMDALALLGGLVNVARLPERWGPGRFDYWGNSHQIMHLLSVGSILQLHAGVVPDLLWAAHHACPRD.

The next 6 membrane-spanning stretches (helical) occupy residues 52–72 (IYTHGLALLGFLVLVPMTMPW), 79–99 (GWLGGTHCVACLAPPAGSVLY), 115–135 (LLALDMCGVCLVNTLGALPII), 147–167 (PAALVGYTVLSGVAGWRALTA), 185–205 (LLVFGARGVGLGSGAPGSLPC), and 245–265 (LLSVGSILQLHAGVVPDLLWA).

Belongs to the ADIPOR family. As to quaternary structure, interacts with CERS2 and CERS5; the interaction regulates CERS2 and CERS5 stabilities and activities and is inhibited in presence of ceramides. In terms of tissue distribution, relatively widely expressed in a range of tissues. Expressed in subcutaneous white adipose tissue.

It localises to the golgi apparatus membrane. Plays a role in maintaining adipose tissue function through the regulation of ceramide levels. Mediates the stability of ceramide synthetases, CERS2 and CERS5, and their activities. This Homo sapiens (Human) protein is Progestin and adipoQ receptor family member 4.